The primary structure comprises 482 residues: UDP-N-acetylmuramate--L-alanine ligase (482 aa).

ATP is bound at residue 129-135 (GTHGKTT).

Belongs to the MurCDEF family.

Its subcellular location is the cytoplasm. The enzyme catalyses UDP-N-acetyl-alpha-D-muramate + L-alanine + ATP = UDP-N-acetyl-alpha-D-muramoyl-L-alanine + ADP + phosphate + H(+). It functions in the pathway cell wall biogenesis; peptidoglycan biosynthesis. Its function is as follows. Cell wall formation. This is UDP-N-acetylmuramate--L-alanine ligase from Acinetobacter baumannii (strain AB307-0294).